We begin with the raw amino-acid sequence, 599 residues long: Interleukin-18 receptor accessory protein (599 aa).

The signal sequence occupies residues Met-1–Gly-19. The Extracellular portion of the chain corresponds to Phe-20–Arg-356. N-linked (GlcNAc...) asparagine glycosylation is found at Asn-21, Asn-119, and Asn-152. Cys-46 and Cys-126 form a disulfide bridge. Ig-like C2-type domains lie at Pro-149–Arg-235 and Pro-251–Lys-353. Cystine bridges form between Cys-155–Cys-180, Cys-175–Cys-221, Cys-180–Cys-221, and Cys-273–Cys-337. N-linked (GlcNAc...) asparagine glycosylation occurs at Asn-345. A helical transmembrane segment spans residues Gly-357–Ala-377. Topologically, residues Ser-378–Trp-599 are cytoplasmic. Residues Lys-406–Met-559 enclose the TIR domain. The active site involves Glu-493.

This sequence belongs to the interleukin-1 receptor family. As to quaternary structure, forms a ternary complex with IL18 and IL18R1. Within this complex, IL18R1 is involved in ligand-binding and IL18RAP in signaling leading to NF-kappa-B and JNK activation. N-glycosylated. In terms of tissue distribution, detected in adrenal gland, bone marrow, brain, fetal brain, fetal liver, heart, kidney, lung, liver, peripheral blood leukocytes, placenta, prostate, salivary gland, skeletal muscle, spinal cord, testis, thymus, thyroid, trachea and uterus. Strongly expressed in peripheral blood leukocytes and spleen and, to a lesser extent, in colon. Specifically coexpressed with IL18R1 in T-helper 1 (Th1)cells.

It is found in the cell membrane. The catalysed reaction is NAD(+) + H2O = ADP-D-ribose + nicotinamide + H(+). Functionally, within the IL18 receptor complex, does not mediate IL18-binding, but involved in IL18-dependent signal transduction, leading to NF-kappa-B and JNK activation. May play a role in IL18-mediated IFNG synthesis from T-helper 1 (Th1) cells. The polypeptide is Interleukin-18 receptor accessory protein (Homo sapiens (Human)).